Here is a 272-residue protein sequence, read N- to C-terminus: ATP phosphoribosyltransferase regulatory subunit (272 aa).

The protein belongs to the class-II aminoacyl-tRNA synthetase family. HisZ subfamily. In terms of assembly, heteromultimer composed of HisG and HisZ subunits.

Its subcellular location is the cytoplasm. It functions in the pathway amino-acid biosynthesis; L-histidine biosynthesis; L-histidine from 5-phospho-alpha-D-ribose 1-diphosphate: step 1/9. In terms of biological role, required for the first step of histidine biosynthesis. May allow the feedback regulation of ATP phosphoribosyltransferase activity by histidine. The protein is ATP phosphoribosyltransferase regulatory subunit of Staphylococcus aureus (strain bovine RF122 / ET3-1).